A 340-amino-acid polypeptide reads, in one-letter code: Anthranilate phosphoribosyltransferase (340 aa).

5-phospho-alpha-D-ribose 1-diphosphate is bound by residues Gly81, 84–85, Thr89, 91–94, 109–117, and Ala121; these read GD, NIST, and KHGNRNLSS. Gly81 is an anthranilate binding site. Ser93 provides a ligand contact to Mg(2+). Asn112 serves as a coordination point for anthranilate. Anthranilate is bound at residue Arg167. Positions 226 and 227 each coordinate Mg(2+).

This sequence belongs to the anthranilate phosphoribosyltransferase family. As to quaternary structure, homodimer. Mg(2+) serves as cofactor.

It catalyses the reaction N-(5-phospho-beta-D-ribosyl)anthranilate + diphosphate = 5-phospho-alpha-D-ribose 1-diphosphate + anthranilate. It functions in the pathway amino-acid biosynthesis; L-tryptophan biosynthesis; L-tryptophan from chorismate: step 2/5. Catalyzes the transfer of the phosphoribosyl group of 5-phosphorylribose-1-pyrophosphate (PRPP) to anthranilate to yield N-(5'-phosphoribosyl)-anthranilate (PRA). The polypeptide is Anthranilate phosphoribosyltransferase (Ruegeria sp. (strain TM1040) (Silicibacter sp.)).